The primary structure comprises 251 residues: 5-oxoprolinase subunit A 2 (251 aa).

This sequence belongs to the LamB/PxpA family. Forms a complex composed of PxpA, PxpB and PxpC.

It catalyses the reaction 5-oxo-L-proline + ATP + 2 H2O = L-glutamate + ADP + phosphate + H(+). Catalyzes the cleavage of 5-oxoproline to form L-glutamate coupled to the hydrolysis of ATP to ADP and inorganic phosphate. This is 5-oxoprolinase subunit A 2 from Pseudomonas syringae pv. tomato (strain ATCC BAA-871 / DC3000).